The primary structure comprises 472 residues: ATP-dependent protease ATPase subunit HslU (472 aa).

ATP is bound by residues isoleucine 20, 62 to 67 (GVGKTE), aspartate 285, glutamate 350, and arginine 422.

It belongs to the ClpX chaperone family. HslU subfamily. As to quaternary structure, a double ring-shaped homohexamer of HslV is capped on each side by a ring-shaped HslU homohexamer. The assembly of the HslU/HslV complex is dependent on binding of ATP.

Its subcellular location is the cytoplasm. ATPase subunit of a proteasome-like degradation complex; this subunit has chaperone activity. The binding of ATP and its subsequent hydrolysis by HslU are essential for unfolding of protein substrates subsequently hydrolyzed by HslV. HslU recognizes the N-terminal part of its protein substrates and unfolds these before they are guided to HslV for hydrolysis. The polypeptide is ATP-dependent protease ATPase subunit HslU (Lactiplantibacillus plantarum (strain ATCC BAA-793 / NCIMB 8826 / WCFS1) (Lactobacillus plantarum)).